The sequence spans 1124 residues: DNA-directed RNA polymerase subunit Rpo2 (1124 aa).

The Zn(2+) site is built by Cys-1061, Cys-1064, Cys-1079, and His-1082.

This sequence belongs to the RNA polymerase beta chain family. In terms of assembly, part of the 13-subunit RNA polymerase complex. Zn(2+) is required as a cofactor.

The protein localises to the cytoplasm. The enzyme catalyses RNA(n) + a ribonucleoside 5'-triphosphate = RNA(n+1) + diphosphate. Its function is as follows. DNA-dependent RNA polymerase (RNAP) catalyzes the transcription of DNA into RNA using the four ribonucleoside triphosphates as substrates. This subunit is involved in DNA promoter recognition. The sequence is that of DNA-directed RNA polymerase subunit Rpo2 from Saccharolobus solfataricus (strain ATCC 35092 / DSM 1617 / JCM 11322 / P2) (Sulfolobus solfataricus).